Consider the following 102-residue polypeptide: Small ribosomal subunit protein uS10 (102 aa).

The protein belongs to the universal ribosomal protein uS10 family. Part of the 30S ribosomal subunit.

Functionally, involved in the binding of tRNA to the ribosomes. The chain is Small ribosomal subunit protein uS10 from Thermococcus gammatolerans (strain DSM 15229 / JCM 11827 / EJ3).